A 525-amino-acid polypeptide reads, in one-letter code: Chromaffin granule amine transporter (525 aa).

Residues 1-21 (MLRTILDAPQRLLKEGRASRQ) lie on the Cytoplasmic side of the membrane. A helical transmembrane segment spans residues 22-42 (LVLVVVFVALLLDNMLFTVVV). At 43–138 (PIVPTFLYDM…TGFLEEEITR (96 aa)) the chain is on the lumenal, vesicle side. N-linked (GlcNAc...) asparagine glycosylation is found at asparagine 58, asparagine 87, and asparagine 104. The chain crosses the membrane as a helical span at residues 139–158 (VGVLFASKAVMQLLVNPFVG). The Cytoplasmic portion of the chain corresponds to 159-167 (PLTNRIGYH). Residues 168–188 (IPMFAGFVIMFLSTVMFAFSG) form a helical membrane-spanning segment. Residues 189–197 (TYTLLFVAR) lie on the Lumenal, vesicle side of the membrane. The chain crosses the membrane as a helical span at residues 198-218 (TLQGIGSSFSSVAGLGMLASV). Topologically, residues 219 to 227 (YTDDHERGR) are cytoplasmic. A helical membrane pass occupies residues 228-250 (AMGTALGGLALGLLVGAPFGSVM). Topologically, residues 251-256 (YEFVGK) are lumenal, vesicle. Residues 257–279 (SAPFLILAFLALLDGALQLCILQ) form a helical membrane-spanning segment. Over 280 to 299 (PSKVSPESAKGTPLFMLLKD) the chain is Cytoplasmic. Residues 300–319 (PYILVAAGSICFANMGVAIL) form a helical membrane-spanning segment. Residues 320 to 335 (EPTLPIWMMQTMCSPK) are Lumenal, vesicle-facing. A helical membrane pass occupies residues 336-360 (WQLGLAFLPASVSYLIGTNLFGVLA). Topologically, residues 361 to 365 (NKMGR) are cytoplasmic. A helical membrane pass occupies residues 366–386 (WLCSLIGMLVVGTSLLCVPLA). The Lumenal, vesicle segment spans residues 387–397 (HNIFGLIGPNA). A helical membrane pass occupies residues 398 to 418 (GLGLAIGMVDSSMMPIMGHLV). Over 419 to 422 (DLRH) the chain is Cytoplasmic. The chain crosses the membrane as a helical span at residues 423–443 (TSVYGSVYAIADVAFCMGFAI). The Lumenal, vesicle segment spans residues 444 to 448 (GPSTG). Residues 449-470 (GAIVKAIGFPWLMVITGVINIV) traverse the membrane as a helical segment. Over 471 to 525 (YAPLCYYLRSPPAKEEKLAILSQDCPMETRMYATQKPTKEFPLGEDSDEEPDHEE) the chain is Cytoplasmic. The tract at residues 503 to 525 (ATQKPTKEFPLGEDSDEEPDHEE) is disordered. The segment covering 513–525 (LGEDSDEEPDHEE) has biased composition (acidic residues).

Belongs to the major facilitator superfamily. Vesicular transporter family. Expressed primarily in neuroendocrine tissues. Highly expressed in chromaffin cells of the adrenal medulla (at protein level). Detected in peripheral sympathetic ganglia (at protein level). Found in some paracrine cells in stomach and duodenum (at protein level). Expressed in substantia nigra. As to expression, expressed in gastrointestinal tract.

Its subcellular location is the cytoplasmic vesicle. It is found in the secretory vesicle membrane. It localises to the secretory vesicle. The protein localises to the synaptic vesicle membrane. The protein resides in the endoplasmic reticulum membrane. The enzyme catalyses serotonin(in) + 2 H(+)(out) = serotonin(out) + 2 H(+)(in). It catalyses the reaction (R)-noradrenaline(in) + 2 H(+)(out) = (R)-noradrenaline(out) + 2 H(+)(in). The catalysed reaction is dopamine(in) + 2 H(+)(out) = dopamine(out) + 2 H(+)(in). Its activity is regulated as follows. Strongly inhibited by reserpine. Also inhibited to a lesser extent by ketanserin and fenfluramine. Not significantly inhibited by tetrabenazine. Its function is as follows. Electrogenic antiporter that exchanges one cationic monoamine with two intravesicular protons across the membrane of secretory and synaptic vesicles. Uses the electrochemical proton gradient established by the V-type proton-pump ATPase to accumulate high concentrations of monoamines inside the vesicles prior to their release via exocytosis. Transports catecholamines and indolamines with higher affinity for serotonin. Regulates the transvesicular monoaminergic gradient that determines the quantal size. Mediates presynaptic monoaminergic vesicle transport in the amygdala and prefrontal brain regions related with emotion processing in response to environmental stimuli. Unable to uptake serotonin. This chain is Chromaffin granule amine transporter (SLC18A1), found in Homo sapiens (Human).